The sequence spans 774 residues: MERPLCSHLCSCLAMLALLSPLSLAQYDSWPHYPEYFQQPAPEYHQPQAPANVAKIQLRLAGQKRKHSEGRVEVYYDGQWGTVCDDDFSIHAAHVVCRELGYVEAKSWTASSSYGKGEGPIWLDNLHCTGNEATLAACTSNGWGVTDCKHTEDVGVVCSDKRIPGFKFDNSLINQIENLNIQVEDIRIRAILSTYRKRTPVMEGYVEVKEGKTWKQICDKHWTAKNSRVVCGMFGFPGERTYNTKVYKMFASRRKQRYWPFSMDCTGTEAHISSCKLGPQVSLDPMKNVTCENGLPAVVSCVPGQVFSPDGPSRFRKAYKPEQPLVRLRGGAYIGEGRVEVLKNGEWGTVCDDKWDLVSASVVCRELGFGSAKEAVTGSRLGQGIGPIHLNEIQCTGNEKSIIDCKFNAESQGCNHEEDAGVRCNTPAMGLQKKLRLNGGRNPYEGRVEVLVERNGSLVWGMVCGQNWGIVEAMVVCRQLGLGFASNAFQETWYWHGDVNSNKVVMSGVKCSGTELSLAHCRHDGEDVACPQGGVQYGAGVACSETAPDLVLNAEMVQQTTYLEDRPMFMLQCAMEENCLSASAAQTDPTTGYRRLLRFSSQIHNNGQSDFRPKNGRHAWIWHDCHRHYHSMEVFTHYDLLNLNGTKVAEGHKASFCLEDTECEGDIQKNYECANFGDQGITMGCWDMYRHDIDCQWVDITDVPPGDYLFQVVINPNFEVAESDYSNNIMKCRSRYDGHRIWMYNCHIGGSFSEETEKKFEHFSGLLNNQLSPQ.

Positions 1 to 25 (MERPLCSHLCSCLAMLALLSPLSLA) are cleaved as a signal peptide. SRCR domains lie at 58 to 159 (LRLA…VVCS), 188 to 302 (IRAI…VSCV), 326 to 425 (VRLR…VRCN), and 435 to 544 (LRLN…VACS). 9 disulfides stabilise this stretch: cysteine 84/cysteine 148, cysteine 97/cysteine 158, cysteine 128/cysteine 138, cysteine 218/cysteine 291, cysteine 231/cysteine 301, cysteine 265/cysteine 275, cysteine 351/cysteine 414, cysteine 364/cysteine 424, and cysteine 395/cysteine 405. Asparagine 288 carries N-linked (GlcNAc...) asparagine glycosylation. The N-linked (GlcNAc...) (complex) asparagine glycan is linked to asparagine 455. Intrachain disulfides connect cysteine 464-cysteine 530, cysteine 477-cysteine 543, and cysteine 511-cysteine 521. The segment at 548 to 751 (PDLVLNAEMV…WMYNCHIGGS (204 aa)) is lysyl-oxidase like. Ca(2+)-binding residues include aspartate 549 and leucine 550. 4 disulfide bridges follow: cysteine 573–cysteine 625, cysteine 579–cysteine 695, cysteine 657–cysteine 673, and cysteine 663–cysteine 685. Cu cation contacts are provided by histidine 626, histidine 628, and histidine 630. A glycan (N-linked (GlcNAc...) (complex) asparagine) is linked at asparagine 644. Residues 653-689 (KASFCLEDTECEGDIQKNYECANFGDQGITMGCWDMY) constitute a cross-link (lysine tyrosylquinone (Lys-Tyr)). A 2',4',5'-topaquinone modification is found at tyrosine 689. Residues glutamate 722, aspartate 724, asparagine 727, and asparagine 728 each coordinate Ca(2+). Cysteine 732 and cysteine 746 are joined by a disulfide.

This sequence belongs to the lysyl oxidase family. As to quaternary structure, component of some chromatin repressor complex. Interacts with SNAI1. Interacts with TAF10. Interacts with HSPA5. Interacts with EFEMP2. Cu cation is required as a cofactor. Requires lysine tyrosylquinone residue as cofactor. Post-translationally, the lysine tyrosylquinone cross-link (LTQ) is generated by condensation of the epsilon-amino group of a lysine with a topaquinone produced by oxidation of tyrosine. N-glycosylated. N-glycosylation on Asn-455 and Asn-644 may be essential for proper folding and secretion; may be composed of a fucosylated carbohydrates attached to a trimannose N-linked glycan core. In terms of tissue distribution, expressed in many tissues. Highest expression in reproductive tissues, placenta, uterus and prostate. In esophageal epithelium, expressed in the basal, prickle and granular cell layers. Up-regulated in a number of cancers cells and tissues.

The protein localises to the secreted. It is found in the extracellular space. The protein resides in the extracellular matrix. It localises to the basement membrane. Its subcellular location is the nucleus. The protein localises to the chromosome. It is found in the endoplasmic reticulum. It carries out the reaction L-lysyl-[protein] + O2 + H2O = (S)-2-amino-6-oxohexanoyl-[protein] + H2O2 + NH4(+). According to some reports, it is inhibited by beta-aminopropionitrile (BAPN). According to another report, it is not inhibited by beta-aminopropionitrile (BAPN). Specifically inhibited by a mouse monoclonal antibody AB0023, inhibition occurs in a non-competitive manner. Functionally, mediates the post-translational oxidative deamination of lysine residues on target proteins leading to the formation of deaminated lysine (allysine). Acts as a transcription corepressor and specifically mediates deamination of trimethylated 'Lys-4' of histone H3 (H3K4me3), a specific tag for epigenetic transcriptional activation. Shows no activity against histone H3 when it is trimethylated on 'Lys-9' (H3K9me3) or 'Lys-27' (H3K27me3) or when 'Lys-4' is monomethylated (H3K4me1) or dimethylated (H3K4me2). Also mediates deamination of methylated TAF10, a member of the transcription factor IID (TFIID) complex, which induces release of TAF10 from promoters, leading to inhibition of TFIID-dependent transcription. LOXL2-mediated deamination of TAF10 results in transcriptional repression of genes required for embryonic stem cell pluripotency including POU5F1/OCT4, NANOG, KLF4 and SOX2. Involved in epithelial to mesenchymal transition (EMT) via interaction with SNAI1 and participates in repression of E-cadherin CDH1, probably by mediating deamination of histone H3. During EMT, involved with SNAI1 in negatively regulating pericentromeric heterochromatin transcription. SNAI1 recruits LOXL2 to pericentromeric regions to oxidize histone H3 and repress transcription which leads to release of heterochromatin component CBX5/HP1A, enabling chromatin reorganization and acquisition of mesenchymal traits. Interacts with the endoplasmic reticulum protein HSPA5 which activates the IRE1-XBP1 pathway of the unfolded protein response, leading to expression of several transcription factors involved in EMT and subsequent EMT induction. Involved in E-cadherin repression following hypoxia, a hallmark of EMT believed to amplify tumor aggressiveness, suggesting that it may play a role in tumor progression. When secreted into the extracellular matrix, promotes cross-linking of extracellular matrix proteins by mediating oxidative deamination of peptidyl lysine residues in precursors to fibrous collagen and elastin. Acts as a regulator of sprouting angiogenesis, probably via collagen IV scaffolding. Acts as a regulator of chondrocyte differentiation, probably by regulating expression of factors that control chondrocyte differentiation. This Homo sapiens (Human) protein is Lysyl oxidase homolog 2 (LOXL2).